A 257-amino-acid chain; its full sequence is Glutamate racemase (257 aa).

Substrate is bound by residues 12 to 13 (DS) and 44 to 45 (YG). Residue C75 is the Proton donor/acceptor of the active site. A substrate-binding site is contributed by 76 to 77 (NT). C186 acts as the Proton donor/acceptor in catalysis. 187 to 188 (TH) provides a ligand contact to substrate.

It belongs to the aspartate/glutamate racemases family.

The enzyme catalyses L-glutamate = D-glutamate. It participates in cell wall biogenesis; peptidoglycan biosynthesis. Its function is as follows. Provides the (R)-glutamate required for cell wall biosynthesis. This Clostridium kluyveri (strain NBRC 12016) protein is Glutamate racemase.